Reading from the N-terminus, the 1102-residue chain is Carbamoyl phosphate synthase large chain (1102 aa).

Residues 1–408 (MPKRTDIQSV…ALQKALRSLE (408 aa)) are carboxyphosphate synthetic domain. ATP-binding residues include Arg-129, Arg-175, Gly-181, Gly-182, Glu-214, Ile-216, Glu-221, Gly-247, Val-248, His-249, Gln-291, and Glu-305. The 197-residue stretch at 138–334 (AVRAKIGHGE…IAKIAAKLAV (197 aa)) folds into the ATP-grasp 1 domain. Mg(2+) is bound by residues Gln-291, Glu-305, and Asn-307. The Mn(2+) site is built by Gln-291, Glu-305, and Asn-307. The segment at 409–551 (KKGSQFTFVG…YFYSSYDEES (143 aa)) is oligomerization domain. The interval 552-954 (EVAPREKPAV…AYAKSQAGAY (403 aa)) is carbamoyl phosphate synthetic domain. Residues 682-873 (GQVLAEAGLP…LAKAAARISL (192 aa)) enclose the ATP-grasp 2 domain. Arg-718, Arg-757, Leu-759, Glu-764, Gly-789, Ile-790, His-791, Ser-792, Gln-832, and Glu-844 together coordinate ATP. Positions 832, 844, and 846 each coordinate Mg(2+). 3 residues coordinate Mn(2+): Gln-832, Glu-844, and Asn-846. Positions 955-1100 (GPLPTKGRAF…QEHAEHLTAA (146 aa)) constitute an MGS-like domain. The segment at 955–1102 (GPLPTKGRAF…HAEHLTAARD (148 aa)) is allosteric domain.

Belongs to the CarB family. In terms of assembly, composed of two chains; the small (or glutamine) chain promotes the hydrolysis of glutamine to ammonia, which is used by the large (or ammonia) chain to synthesize carbamoyl phosphate. Tetramer of heterodimers (alpha,beta)4. Requires Mg(2+) as cofactor. It depends on Mn(2+) as a cofactor.

The catalysed reaction is hydrogencarbonate + L-glutamine + 2 ATP + H2O = carbamoyl phosphate + L-glutamate + 2 ADP + phosphate + 2 H(+). It catalyses the reaction hydrogencarbonate + NH4(+) + 2 ATP = carbamoyl phosphate + 2 ADP + phosphate + 2 H(+). The protein operates within amino-acid biosynthesis; L-arginine biosynthesis; carbamoyl phosphate from bicarbonate: step 1/1. It functions in the pathway pyrimidine metabolism; UMP biosynthesis via de novo pathway; (S)-dihydroorotate from bicarbonate: step 1/3. Large subunit of the glutamine-dependent carbamoyl phosphate synthetase (CPSase). CPSase catalyzes the formation of carbamoyl phosphate from the ammonia moiety of glutamine, carbonate, and phosphate donated by ATP, constituting the first step of 2 biosynthetic pathways, one leading to arginine and/or urea and the other to pyrimidine nucleotides. The large subunit (synthetase) binds the substrates ammonia (free or transferred from glutamine from the small subunit), hydrogencarbonate and ATP and carries out an ATP-coupled ligase reaction, activating hydrogencarbonate by forming carboxy phosphate which reacts with ammonia to form carbamoyl phosphate. This is Carbamoyl phosphate synthase large chain from Streptomyces avermitilis (strain ATCC 31267 / DSM 46492 / JCM 5070 / NBRC 14893 / NCIMB 12804 / NRRL 8165 / MA-4680).